The sequence spans 88 residues: Probable small nuclear ribonucleoprotein F (88 aa).

In terms of domain architecture, Sm spans 7-79; sequence NPKPFLNNLT…VLYVRGVPED (73 aa).

This sequence belongs to the snRNP Sm proteins family. SmF/LSm6 subfamily.

It localises to the nucleus. In terms of biological role, probable common Sm protein, is found in U1 and U2 snRNPs and may be part of the spliceosome. The chain is Probable small nuclear ribonucleoprotein F from Arabidopsis thaliana (Mouse-ear cress).